The primary structure comprises 384 residues: L-type lectin-like domain-containing protein C4F6.05c (384 aa).

The first 19 residues, 1-19, serve as a signal peptide directing secretion; that stretch reads MKFCSLFHVLSFCCTLAYA. Residues 20-224 enclose the L-type lectin-like domain; the sequence is VPKSQFLQLH…DLVALSNLNI (205 aa). At 20-353 the chain is on the extracellular side; that stretch reads VPKSQFLQLH…AMGNAYSPYN (334 aa). The interval 227 to 251 is disordered; the sequence is PDTSNNENLNPTSNTKQSVGDNTSP. The chain crosses the membrane as a helical span at residues 354–374; it reads LTNFMVFLLLGAIVSYGIMLV. The Cytoplasmic portion of the chain corresponds to 375–384; it reads RRDRRRHKYL.

The protein resides in the membrane. The protein localises to the endoplasmic reticulum. It localises to the golgi apparatus. The protein is L-type lectin-like domain-containing protein C4F6.05c of Schizosaccharomyces pombe (strain 972 / ATCC 24843) (Fission yeast).